Here is a 2035-residue protein sequence, read N- to C-terminus: MFSKKPHGDVKKSTQKVLDTKKDALTRLKHLRIVIENAESIDLKQFFDQHFSHIYYVFFENFVTIEASLKQKGHKSQREELDAILFIFEKILQLLPERIHQRWQFHSIGLILKKLLHTGNSLKIRREGVRLFLLWLQALQDNCSKEQLWMFSCLIPGFSAPQSEYGPRTLDNLINPPLSLQETQVTIEEVTPLVPPQSGDKGQEDLTSYFLEALLKYIVIQVKSLEWKNKENQERGFSFLFSHFKKFYLPYIFPNICKENSLYHPVLDIPQIRPKPHYVMIKKDAETNETIYCTKEPFIQARVIVIRWLVSFWLEPKPHSGPNIPGMEGEVLPKNIQRAAASLVSREESKNDTVDKVDKSAEPEQSHSNTSTLTEREPSSSSLCSIDEEHLTDIEIVRRVFSSKRSNVNFVTEIFRQAFLLPICEAAAMRKVVKVYQEWIQQEEKPLFMQEPEDTAITCSDIPCSETVADHDSAIEDGEKREEENGTSTSEHVRNSSWTKNGSYQEAFHVCEEATEQNIQAGTQAVLQVFIINSSNIFLLEPANEIKNLLDEHTDMCKRILNIYRYMVVQVSMDKKTWEQMLLVLLRVTESVLKMSSQAFLQFQGKKSMTLAGRLAGPLFQTLIVAWIKANLNVYISRELWDDLLSVLSSLTYWEELATEWSLTMETLTKVLARNLYSLDLSDLPLDKLSEQKQKKHKGKGVGHEFQKVSVDKSFSRGWSRDQPGQAPMRQRSATTTGSPGTEKARSIVRQKTVDIDDAQILPRSTRVRHFSQSEDTGNEVFGALHEEQPLPRSSSTSDILEPFTVERAKVNKEDTSPKLPPLNSETGGNSANVPDLMDEFIAERLRSGNASTMTRRGSSPGSLEIPKDLPDILNKQNQMRPVDDPGVPSEWTSPASAGSSDLMSSDSHSDSFSAFQCEGRKFDNFGFGTDIGIPSSADVDLGSGHHQSTEEQEVASLTTLHLDSETSSLNQQAFSAEVATVTGSESASPVHSALGSRSQTPSPSTLSRAHIEQKDLQLDEKLHHSVLQTPDDLEISEFPSECCSVMAGGTLTGWHADVATVMWRRMLGILGDVNAIMDPEIHAQVFDYLCELWQNLAKIRDNLGISADNLTSPSPPVLIPPLRILTPWLFKATMLTDKYKQGKLHAYKLICNTMKRRQDVSPNRDFLTHFYNIMHCGLLHIDQDIVNTIIKHCSPQFFSLGLPGATMLIMDFIIAAGRVASSAFLNAPRVEAQVLLGSLVCFPNLYCELPALHPNIPDIAVSQFTDVKELIIKTVLSSARDEPSGPARCVALCSLGIWICEELVHESHHPQIKEALNVICVSLKFTNKTVAHVACNMLHMLVHYVPRLQIHQPQSPLKIIQILIATITHLLPSTEASSYEMDKRLVVSLLLCLLDWIMALPLKTLLQPVHATGAENDKTEKSVLNCIYKVLHGCVYGAQSFSNPKYFPISLSDLASVDYDPFMHLESLKEPEPLHSPDSERSSKLQPVTEVKTQMQQGLISIAARTVITHLVNHLGHYPMSGGPAMLTSQVCENHDNHYSESTELSPELFESPNIQFFVLNNTTLVSCIQIRSEESMPGGGLAAGLVSANSNVRIIVRDLSGKYSWDSAILYGPPIVSGLPEPTSFILSMSDQEKPEEPPTSNECLEDIAVKDGLSLQLRRFRETVPTWSTIREEEDVLDELLQYLGTTSPECLQRTGISLNVPAPQPLCISEKQENDVINAILKQYTEEKEFVEKHFNDLNMKASEQDEPTPQKPQSAFYYCRLLLSILGMNSWDKRRSFHLLKKNEKLLRELRNLDSRQCRETHKIAVFYVAEGQEDKYSILTNIGGSQAYEDFVAGLGWEVNLTNHCGFMGGLQKNRSTGLTTPYFATSTVEVIFHVSTRMPSDSDDSLTKKLRHLGNDEVHIVWSEHTRDYRRGIIPTEFGDVLIVIYPMKNHMFSIQIMKKPEVPFFGPLFDGAIVNGKVLPIMVRSTAINASRALKSLIPLYQNFYEERARYLQTIVQHHLEPTTFEDFAAQVFSPAPYHHFPADADH.

Disordered stretches follow at residues 343–384 and 477–496; these read LVSR…SSLC and DGEK…VRNS. Residues 345–365 are compositionally biased toward basic and acidic residues; that stretch reads SREESKNDTVDKVDKSAEPEQ. Composition is skewed to polar residues over residues 366-384 and 486-496; these read SHSN…SSLC and GTSTSEHVRNS. Residues S710 and S720 each carry the phosphoserine modification. Residues 714–752 form a disordered region; sequence SFSRGWSRDQPGQAPMRQRSATTTGSPGTEKARSIVRQK. Phosphothreonine is present on T753. A Phosphoserine modification is found at S772. Phosphothreonine is present on T777. A Phosphoserine modification is found at S796. A compositionally biased stretch (basic and acidic residues) spans 807–817; that stretch reads ERAKVNKEDTS. 2 disordered regions span residues 807–834 and 848–911; these read ERAK…SANV and SGNA…SHSD. 2 stretches are compositionally biased toward polar residues: residues 824 to 833 and 849 to 862; these read NSETGGNSAN and GNAS…SSPG. Phosphoserine is present on residues S859, S860, and S863. Residues 894–911 show a composition bias toward low complexity; that stretch reads SPASAGSSDLMSSDSHSD. Residues S985, S989, S993, and S999 each carry the phosphoserine modification. The segment covering 986-1008 has biased composition (polar residues); sequence ESASPVHSALGSRSQTPSPSTLS. A disordered region spans residues 986–1011; it reads ESASPVHSALGSRSQTPSPSTLSRAH. T1001 is modified (phosphothreonine). Phosphoserine occurs at positions 1003 and 1477. The minimal domain that binds to TCF3/E12 stretch occupies residues 1326-2035; sequence FTNKTVAHVA…YHHFPADADH (710 aa). Residues 1713-1748 are a coiled coil; sequence SEKQENDVINAILKQYTEEKEFVEKHFNDLNMKASE. In terms of domain architecture, Rap-GAP spans 1795–2003; sequence LRNLDSRQCR…EERARYLQTI (209 aa).

In terms of assembly, component of the heterodimeric RalGAP1 complex with RALGAPB. Heterodimerization is required for activity. Interacts with the HLH region of TCF3/isoform E12. In terms of tissue distribution, expressed during embryogenesis. Expressed in the adult brain, particularly in neurons of the cortex and hippocampus.

Its subcellular location is the cytoplasm. The protein localises to the nucleus. Its function is as follows. Catalytic subunit of the heterodimeric RalGAP1 complex which acts as a GTPase activator for the Ras-like small GTPases RALA and RALB. May interact with the HLH region of TCF3/isoform E12. The chain is Ral GTPase-activating protein subunit alpha-1 (Ralgapa1) from Mus musculus (Mouse).